The primary structure comprises 441 residues: Ribulose bisphosphate carboxylase large chain (441 aa).

Lysine 5 bears the N6,N6,N6-trimethyllysine mark. Asparagine 114 and threonine 164 together coordinate substrate. Catalysis depends on lysine 166, which acts as the Proton acceptor. Lysine 168 provides a ligand contact to substrate. Residues lysine 192, aspartate 194, and glutamate 195 each contribute to the Mg(2+) site. Lysine 192 is modified (N6-carboxylysine). Histidine 285 serves as the catalytic Proton acceptor. The substrate site is built by arginine 286, histidine 318, and serine 370.

The protein belongs to the RuBisCO large chain family. Type I subfamily. In terms of assembly, heterohexadecamer of 8 large chains and 8 small chains; disulfide-linked. The disulfide link is formed within the large subunit homodimers. Requires Mg(2+) as cofactor. The disulfide bond which can form in the large chain dimeric partners within the hexadecamer appears to be associated with oxidative stress and protein turnover.

It localises to the plastid. The protein resides in the chloroplast. It catalyses the reaction 2 (2R)-3-phosphoglycerate + 2 H(+) = D-ribulose 1,5-bisphosphate + CO2 + H2O. It carries out the reaction D-ribulose 1,5-bisphosphate + O2 = 2-phosphoglycolate + (2R)-3-phosphoglycerate + 2 H(+). In terms of biological role, ruBisCO catalyzes two reactions: the carboxylation of D-ribulose 1,5-bisphosphate, the primary event in carbon dioxide fixation, as well as the oxidative fragmentation of the pentose substrate in the photorespiration process. Both reactions occur simultaneously and in competition at the same active site. The polypeptide is Ribulose bisphosphate carboxylase large chain (Argyrochosma delicatula (Delicate cloak fern)).